The following is a 209-amino-acid chain: Molybdenum cofactor guanylyltransferase (209 aa).

Residues 13–15 (LAG), K26, N54, D74, and D104 contribute to the GTP site. D104 is a binding site for Mg(2+).

Belongs to the MobA family. As to quaternary structure, monomer. The cofactor is Mg(2+).

Its subcellular location is the cytoplasm. It catalyses the reaction Mo-molybdopterin + GTP + H(+) = Mo-molybdopterin guanine dinucleotide + diphosphate. Transfers a GMP moiety from GTP to Mo-molybdopterin (Mo-MPT) cofactor (Moco or molybdenum cofactor) to form Mo-molybdopterin guanine dinucleotide (Mo-MGD) cofactor. The protein is Molybdenum cofactor guanylyltransferase of Acinetobacter baumannii (strain ACICU).